Here is a 3305-residue protein sequence, read N- to C-terminus: Microtubule-actin cross-linking factor 1, isoforms 6/7 (3305 aa).

7 disordered regions span residues 1–24 (MGKPLSRPDCLRRNPTCLGKGEDE), 108–140 (VQKSAPVPPRRRPNAERKDNVNRRSWKSFMPPN), 152–202 (LSEV…KSVD), 239–272 (AAASGNTDEMQEHRFSSATWPRAMKSSSKGGFSE), 333–381 (EEWE…VAVS), 941–1007 (EPAI…PEWS), and 2865–2896 (SVEPTHAPFMEKSRSGSRKSLNQPTPPPMPIL). Residues 120 to 129 (PNAERKDNVN) are compositionally biased toward basic and acidic residues. 2 consecutive EF-hand domains span residues 2958–2993 (HKKSRVMDFFRRIDKDQDGKITRQEFIDGILASKFP) and 2994–3029 (TTKLEMTAVADIFDRDGDGYIDYYEFVAALHPNKDA). 10 residues coordinate Ca(2+): D2971, D2973, D2975, K2977, E2982, D3007, D3009, D3011, Y3013, and E3018. Residues 3034 to 3106 (TDADKIEDEV…EFLVKNDPCR (73 aa)) enclose the GAR domain. Residues 3122–3305 (PEGASQGMTP…ASPRTPGPKR (184 aa)) form a disordered region. Low complexity predominate over residues 3142-3176 (SSRAASPTRSSSSASQSNHSCTSMPSSPATPASGT). Positions 3193 to 3212 (FHSSRTSLAGDTSNSSSPAS) are enriched in polar residues. The span at 3227–3241 (SRPGSRAGSRAGSRA) shows a compositional bias: low complexity. The segment covering 3256–3266 (ETQSACSDTSE) has biased composition (polar residues). Residues 3267–3278 (SSAAGGQGSSRR) are compositionally biased toward low complexity.

The protein localises to the cytoplasm. It localises to the cytoskeleton. In Mus musculus (Mouse), this protein is Microtubule-actin cross-linking factor 1, isoforms 6/7.